Reading from the N-terminus, the 392-residue chain is Methylthioribose-1-phosphate isomerase (392 aa).

The active-site Proton donor is the aspartate 253.

Belongs to the eIF-2B alpha/beta/delta subunits family. MtnA subfamily.

Its subcellular location is the cytoplasm. It is found in the nucleus. The catalysed reaction is 5-(methylsulfanyl)-alpha-D-ribose 1-phosphate = 5-(methylsulfanyl)-D-ribulose 1-phosphate. It functions in the pathway amino-acid biosynthesis; L-methionine biosynthesis via salvage pathway; L-methionine from S-methyl-5-thio-alpha-D-ribose 1-phosphate: step 1/6. Functionally, catalyzes the interconversion of methylthioribose-1-phosphate (MTR-1-P) into methylthioribulose-1-phosphate (MTRu-1-P). This chain is Methylthioribose-1-phosphate isomerase (mri1), found in Pyrenophora tritici-repentis (strain Pt-1C-BFP) (Wheat tan spot fungus).